The chain runs to 459 residues: Nuclear hormone receptor family member nhr-11 (459 aa).

Positions 2–81 (GPLCAVCESP…AGMRSELVRS (80 aa)) form a DNA-binding region, nuclear receptor. 2 NR C4-type zinc fingers span residues 5-26 (CAVC…CKAC) and 42-69 (CAAD…LRKC). Disordered regions lie at residues 90 to 119 (RRKD…EEMD) and 134 to 162 (DLPL…SSFD). Residues 97–115 (NSDAAPNSNSPSTRQSSSP) show a composition bias toward low complexity. Positions 188-458 (ENNSILQYYH…SMLHEMLNFQ (271 aa)) constitute an NR LBD domain.

Belongs to the nuclear hormone receptor family.

The protein localises to the nucleus. Its function is as follows. Orphan nuclear receptor. The protein is Nuclear hormone receptor family member nhr-11 (nhr-11) of Caenorhabditis elegans.